A 260-amino-acid chain; its full sequence is Small ribosomal subunit protein cS22 (260 aa).

The N-terminal 62 residues, 1 to 62 (MATISSILPC…TNPPLLKVRA (62 aa)), are a transit peptide targeting the chloroplast. Over residues 63–78 (VVTEETSSSSTASSSS) the composition is skewed to low complexity. The interval 63-83 (VVTEETSSSSTASSSSDGEGA) is disordered. RRM domains are found at residues 84-162 (RRLY…ITEK) and 184-260 (YKVY…VNKA).

As to quaternary structure, component of the chloroplast small ribosomal subunit (SSU). Mature 70S chloroplast ribosomes of higher plants consist of a small (30S) and a large (50S) subunit. The 30S small subunit contains 1 molecule of ribosomal RNA (16S rRNA) and 24 different proteins. The 50S large subunit contains 3 rRNA molecules (23S, 5S and 4.5S rRNA) and 33 different proteins.

The protein localises to the plastid. Its subcellular location is the chloroplast. Its function is as follows. Component of the chloroplast ribosome (chloro-ribosome), a dedicated translation machinery responsible for the synthesis of chloroplast genome-encoded proteins, including proteins of the transcription and translation machinery and components of the photosynthetic apparatus. cS22 may have a role in the recruitment of stored chloroplast mRNAs for active protein synthesis. This chain is Small ribosomal subunit protein cS22 (PSRP2), found in Spinacia oleracea (Spinach).